A 260-amino-acid polypeptide reads, in one-letter code: Methanethiol S-methyltransferase (260 aa).

5 helical membrane passes run 27–47 (CYLF…GIGV), 55–75 (PGIT…LFAA), 107–127 (CLVL…VWNV), 134–154 (GLLI…TFLI), and 196–216 (FLIA…FAIL).

Belongs to the nurim family.

It is found in the membrane. It carries out the reaction methanethiol + S-adenosyl-L-methionine = dimethyl sulfide + S-adenosyl-L-homocysteine + H(+). Functionally, catalyzes the methylation of methanethiol (MeSH) to yield dimethylsulphide (DMS). In Pseudomonas sp. (strain GM41(2012)), this protein is Methanethiol S-methyltransferase.